A 141-amino-acid polypeptide reads, in one-letter code: Nucleoside diphosphate kinase (141 aa).

ATP contacts are provided by Lys-11, Phe-59, Arg-87, Thr-93, Arg-104, and Asn-114. Catalysis depends on His-117, which acts as the Pros-phosphohistidine intermediate.

Belongs to the NDK family. Homotetramer. It depends on Mg(2+) as a cofactor.

It localises to the cytoplasm. It carries out the reaction a 2'-deoxyribonucleoside 5'-diphosphate + ATP = a 2'-deoxyribonucleoside 5'-triphosphate + ADP. It catalyses the reaction a ribonucleoside 5'-diphosphate + ATP = a ribonucleoside 5'-triphosphate + ADP. Functionally, major role in the synthesis of nucleoside triphosphates other than ATP. The ATP gamma phosphate is transferred to the NDP beta phosphate via a ping-pong mechanism, using a phosphorylated active-site intermediate. The polypeptide is Nucleoside diphosphate kinase (Polaromonas sp. (strain JS666 / ATCC BAA-500)).